Reading from the N-terminus, the 341-residue chain is Guanine nucleotide-binding protein subunit beta (341 aa).

WD repeat units lie at residues 54–93 (GHLAKIYAMHWASDSRNLVSASQDGKLIVWDGYTTNKVHA), 96–135 (LRSSWVMTCAYAPSGSYVACGGLDNICSIYSLKTREGNVR), 142–180 (GHTGYLSCCRFLDDNQIVTSSGDMSCALWDIETGQQTTA), 183–222 (GHTGDVMSLSLSPDMRTFVSGACDASAKLWDIRDGMCKQT), 225–264 (GHESDINAITYFPNGYAFATGSDDATCRLFDIRADQEIGM), 269–308 (NIICGITSVAFSKSGRLLLGGYDDFNCNVWDVLRQERAGV), and 311–341 (GHDNRVSCLGVTEDGMAVATGSWDSFLRIWN).

The protein belongs to the WD repeat G protein beta family. In terms of assembly, g proteins are composed of 3 units, alpha, beta and gamma. The G protein beta1-gamma2 dimer interacts with calmodulin. Abundantly expressed in gills, gonad and mantle and at lower levels in digestion gland. Not detected in muscle.

The protein resides in the cytoplasm. Guanine nucleotide-binding proteins (G proteins) are involved as a modulator or transducer in various transmembrane signaling systems. The beta and gamma chains are required for the GTPase activity, for replacement of GDP by GTP, and for G protein-effector interaction. This is Guanine nucleotide-binding protein subunit beta from Pinctada fucata (Akoya pearl oyster).